The primary structure comprises 78 residues: Large ribosomal subunit protein bL31 (78 aa).

Residues Cys16, Cys18, Cys38, and Cys41 each coordinate Zn(2+).

It belongs to the bacterial ribosomal protein bL31 family. Type A subfamily. Part of the 50S ribosomal subunit. It depends on Zn(2+) as a cofactor.

Functionally, binds the 23S rRNA. In Frankia alni (strain DSM 45986 / CECT 9034 / ACN14a), this protein is Large ribosomal subunit protein bL31.